The sequence spans 264 residues: S-adenosylmethionine decarboxylase proenzyme (264 aa).

The active-site Schiff-base intermediate with substrate; via pyruvic acid is the Ser-111. Ser-111 bears the Pyruvic acid (Ser); by autocatalysis mark. The Proton acceptor; for processing activity role is filled by His-116. Catalysis depends on Cys-139, which acts as the Proton donor; for catalytic activity.

This sequence belongs to the prokaryotic AdoMetDC family. Type 2 subfamily. In terms of assembly, heterooctamer of four alpha and four beta chains arranged as a tetramer of alpha/beta heterodimers. Pyruvate serves as cofactor. Is synthesized initially as an inactive proenzyme. Formation of the active enzyme involves a self-maturation process in which the active site pyruvoyl group is generated from an internal serine residue via an autocatalytic post-translational modification. Two non-identical subunits are generated from the proenzyme in this reaction, and the pyruvate is formed at the N-terminus of the alpha chain, which is derived from the carboxyl end of the proenzyme. The post-translation cleavage follows an unusual pathway, termed non-hydrolytic serinolysis, in which the side chain hydroxyl group of the serine supplies its oxygen atom to form the C-terminus of the beta chain, while the remainder of the serine residue undergoes an oxidative deamination to produce ammonia and the pyruvoyl group blocking the N-terminus of the alpha chain.

It catalyses the reaction S-adenosyl-L-methionine + H(+) = S-adenosyl 3-(methylsulfanyl)propylamine + CO2. Its pathway is amine and polyamine biosynthesis; S-adenosylmethioninamine biosynthesis; S-adenosylmethioninamine from S-adenosyl-L-methionine: step 1/1. Its function is as follows. Catalyzes the decarboxylation of S-adenosylmethionine to S-adenosylmethioninamine (dcAdoMet), the propylamine donor required for the synthesis of the polyamines spermine and spermidine from the diamine putrescine. This Geobacillus kaustophilus (strain HTA426) protein is S-adenosylmethionine decarboxylase proenzyme.